A 411-amino-acid polypeptide reads, in one-letter code: LIM domain-binding protein 1 (411 aa).

S2 is subject to N-acetylserine. T61 carries the post-translational modification Phosphothreonine. Phosphoserine occurs at positions 265 and 302. 2 disordered regions span residues 284 to 330 (PPAE…TFAL) and 367 to 411 (DAAN…QASQ). Positions 302–318 (SGGSTMSSGGGNTNNSN) are enriched in low complexity. The region spanning 336–375 (DVMVVGEPTLMGGEFGDEDERLITRLENTQFDAANGIDDE) is the LIM interaction domain (LID) domain.

This sequence belongs to the LDB family. Interacts with ESR1. Forms homodimers and heterodimers. Interacts with and activates LHX1/LIM1. Interacts with the LIM domains of ISL1 and LMO2. Can assemble in a complex with LMO2 and TAL1/SCL but does not interact with TAL1/SCL directly. Strongly interacts with the LIM2 domain of LMX1A and more weakly with the LIM1 domain. Homodimerization is not required for, and does not effect, LMX1A-binding. Component of a nuclear TAL-1 complex composed at least of CBFA2T3, LDB1, TAL1 and TCF3. Interacts with LHX6 and LHX9. At neuronal promoters, forms a complex with LHX3 involved in the specification of interneurons, in motor neurons, it is displaced by ISL1 to form a ternary complex in which ISL1 contacts both LHX3 and LDB1. Interacts with SLK; leading to negatively regulate SLK kinase activity. Interacts with YWHAZ. Interacts with PRDM1/BLIMP1. Interacts with LMO4. Interacts with RLIM/RNF12; the interaction inhibits the ubiquitination of LMO proteins. Ubiquitinated by RLIM/RNF12, leading to its degradation by the proteasome. In terms of tissue distribution, expressed in multiple adult tissues including heart, brain, liver, kidney, testis, lung and muscle, with expression highest in the pituitary gland and skin.

It localises to the nucleus. In terms of biological role, binds to the LIM domain of a wide variety of LIM domain-containing transcription factors. May regulate the transcriptional activity of LIM-containing proteins by determining specific partner interactions. Plays a role in the development of interneurons and motor neurons in cooperation with LHX3 and ISL1. Acts synergistically with LHX1/LIM1 in axis formation and activation of gene expression. Acts with LMO2 in the regulation of red blood cell development, maintaining erythroid precursors in an immature state. This is LIM domain-binding protein 1 (Ldb1) from Mus musculus (Mouse).